Reading from the N-terminus, the 552-residue chain is Membrane protein insertase YidC (552 aa).

The next 5 membrane-spanning stretches (helical) occupy residues 7–24 (VLWV…DNWQ), 364–384 (WGWA…PLSA), 434–454 (LPVV…LASV), 473–493 (PFFI…SLNP), and 508–528 (PIAF…YYVV).

Belongs to the OXA1/ALB3/YidC family. Type 1 subfamily. As to quaternary structure, interacts with the Sec translocase complex via SecD. Specifically interacts with transmembrane segments of nascent integral membrane proteins during membrane integration.

It localises to the cell inner membrane. In terms of biological role, required for the insertion and/or proper folding and/or complex formation of integral membrane proteins into the membrane. Involved in integration of membrane proteins that insert both dependently and independently of the Sec translocase complex, as well as at least some lipoproteins. Aids folding of multispanning membrane proteins. The polypeptide is Membrane protein insertase YidC (Burkholderia cenocepacia (strain ATCC BAA-245 / DSM 16553 / LMG 16656 / NCTC 13227 / J2315 / CF5610) (Burkholderia cepacia (strain J2315))).